The primary structure comprises 313 residues: Pyrimidine-specific ribonucleoside hydrolase RihB (313 aa).

Catalysis depends on Asp11, which acts as the Proton acceptor. Ca(2+)-binding residues include Asp11, Asp16, and Val124. 2 residues coordinate substrate: Gln227 and His239. Asp240 contributes to the Ca(2+) binding site.

Belongs to the IUNH family. RihB subfamily. As to quaternary structure, homotetramer. Ca(2+) is required as a cofactor.

The catalysed reaction is a pyrimidine ribonucleoside + H2O = a pyrimidine nucleobase + D-ribose. In terms of biological role, hydrolyzes cytidine or uridine to ribose and cytosine or uracil, respectively. Has a clear preference for cytidine over uridine. Strictly specific for ribonucleosides. The protein is Pyrimidine-specific ribonucleoside hydrolase RihB of Escherichia coli O157:H7.